Here is a 245-residue protein sequence, read N- to C-terminus: Phosducin (245 aa).

Residues 1-14 show a composition bias toward acidic residues; the sequence is MEEAKSQSLEEDFE. Residues 1–68 are disordered; the sequence is MEEAKSQSLE…RDNKDSKERF (68 aa). Positions 1-241 constitute a Phosducin domain; the sequence is MEEAKSQSLE…THALDQTNME (241 aa). Residues 59–68 show a composition bias toward basic and acidic residues; sequence RDNKDSKERF. Ser73 carries the post-translational modification Phosphoserine; by PKA. Residues 111 to 245 form a thioredoxin fold region; that stretch reads YGFVYELETG…DQTNMEEDIE (135 aa).

It belongs to the phosducin family. As to quaternary structure, interacts with CRX. Forms a complex with the beta and gamma subunits of the GTP-binding protein, transducin. In terms of processing, light-induced changes in cyclic nucleotide levels modulate the phosphorylation of this protein by cAMP kinase.

Its subcellular location is the cytoplasm. It localises to the cytosol. It is found in the nucleus. The protein localises to the cell projection. The protein resides in the cilium. Its subcellular location is the photoreceptor outer segment. It localises to the photoreceptor inner segment. Its function is as follows. Inhibits the transcriptional activation activity of the cone-rod homeobox CRX. May participate in the regulation of visual phototransduction or in the integration of photoreceptor metabolism. In Felis catus (Cat), this protein is Phosducin (PDC).